A 383-amino-acid polypeptide reads, in one-letter code: MTTRTATSTSTTVHGHLGDLKLRNAAITGPHLQPKAAKQDLADTKPDSARTFPGLGFKLSPTEERLRAKRNWGFLETAYDNSKVMGLTTHFVTITMAIVFNKSWLAKPVYDWLNTYDRFTIHTVHTWILLSTCQLLVIGLFALTDLSGRPSWLARYRMQPHKPPTLAQYKKLIPVVLFNLVVVNTISNIIYYPLAEWRGIQTTYETLPSGKKLVAQWLVCLLMEDIGFYTVHRALHHPRIYKYIHKKHHEFSAPIAGASTYAHPLEHYFSNLVPILVGLLITRAHISVQYLFFTGLMIGSHVQHSGYNIPFLTCALVHDWHHYFNTENYGPVGLLDAIFKTNKTFKAWTSETVAAFHGDRAKARQAALEKLAQIEAEEQERIR.

4 consecutive transmembrane segments (helical) span residues 84–104, 123–143, 172–192, and 214–236; these read VMGLTTHFVTITMAIVFNKSW, TVHTWILLSTCQLLVIGLFAL, LIPVVLFNLVVVNTISNIIYY, and VAQWLVCLLMEDIGFYTVHRALH. The Fatty acid hydroxylase domain occupies 217-341; sequence WLVCLLMEDI…VGLLDAIFKT (125 aa). A glycan (N-linked (GlcNAc...) asparagine) is linked at Asn-342.

Belongs to the sterol desaturase family.

The protein resides in the membrane. It functions in the pathway secondary metabolite biosynthesis. Its function is as follows. Fatty acid hydroxylase; part of the gene cluster that mediates the biosynthesis of the glycolipid biosurfactant ustilagic acid (UA). UA is a secreted cellobiose glycolipid that is toxic for many microorganisms and confers biocontrol activity to U.maydis. UA consists of 15,16-dihydroxypalmitic or 2,15,16-trihydroxypalmitic acid, which is O-glycosidically linked to cellobiose at its terminal hydroxyl group. In addition, the cellobiose moiety is acetylated and acylated with a short-chain hydroxy fatty acid. UA biosynthesis starts with omega-hydroxylation of palmitic acid catalyzed by the cytochrome P450 monooxygenase cyp1. Terminal hydroxylation of palmitic acid precedes subterminal hydroxylation catalyzed by the cytochrome P450 monooxygenase cyp2. Sequential glucosylation of the hydroxy fatty acid is probably catalyzed by the glycosyltransferase ugt1. The cellobiose lipid is further decorated by acetylation of the proximal glucose residue and by acylation with a short-chain beta-hydroxy fatty acid at the distal glucose residue. The acyltransferase uat1 may be a good candidate for catalyzing either acetylation or acylation of the cellobiose lipid. The fatty acid synthase fas2 may be involved in synthesis of the carbon backbone of the short-chain beta-hydroxy fatty acid esterified to the cellobiose disaccharide. The secreted UA consists of a mixture of both alpha-hydroxylated and non-hydroxylated glycolipids; therefore, alpha-hydroxylation of the long-chain fatty, catalyzed by the fatty acid hydroxylase ahd1, occurs late in UA biosynthesis and may be the last step before secretion. This is Fatty acid hydroxylase ahd1 from Mycosarcoma maydis (Corn smut fungus).